A 1063-amino-acid chain; its full sequence is Cation efflux system protein CzcA (1063 aa).

Helical transmembrane passes span 14-29 (WLVLLAVFGMAGLGIF), 350-370 (GAVLVIVILFLFLGNIRAALI), 452-472 (LIFGQLIIMIVYLPIFALTGV), 487-507 (ALLGAMILSVTFVPAAVALFI), 534-554 (LANTAVVLTFAAVSIVLCVAI), 883-903 (VVVPVALLLVFVLLFAMFNNI), 906-926 (GLLVFTGIPFALTGGILALWI), 937-957 (VGFIALCGVAVLNGLVMLSFI), 982-1004 (VLMTALVASLGFVPMAIATGTGA), and 1013-1033 (VVIGGILSSTALTLLVLPVLY). The segment at 1040-1063 (DEDAEDTREPVTQTHQPDQGRQPA) is disordered. The span at 1049–1063 (PVTQTHQPDQGRQPA) shows a compositional bias: polar residues.

This sequence belongs to the resistance-nodulation-cell division (RND) (TC 2.A.6) family.

It localises to the cell membrane. Has a low cation transport activity for cobalt, it is essential for the expression of cobalt, zinc, and cadmium resistance. CzcA and CzcB together would act in zinc efflux nearly as effectively as the complete CZC efflux system (CzcABC). The protein is Cation efflux system protein CzcA (czcA) of Alcaligenes sp. (strain CT14).